A 218-amino-acid polypeptide reads, in one-letter code: Small ribosomal subunit protein uS3c (218 aa).

Residues 47 to 118 (VQKNMRTSSG…KLNIAVTRIA (72 aa)) enclose the KH type-2 domain.

This sequence belongs to the universal ribosomal protein uS3 family. Part of the 30S ribosomal subunit.

The protein resides in the plastid. Its subcellular location is the chloroplast. The sequence is that of Small ribosomal subunit protein uS3c (rps3) from Solanum bulbocastanum (Wild potato).